Here is a 149-residue protein sequence, read N- to C-terminus: D-aminoacyl-tRNA deacylase (149 aa).

The Gly-cisPro motif, important for rejection of L-amino acids motif lies at 138–139; sequence GP.

Belongs to the DTD family. Homodimer.

It is found in the cytoplasm. It carries out the reaction glycyl-tRNA(Ala) + H2O = tRNA(Ala) + glycine + H(+). It catalyses the reaction a D-aminoacyl-tRNA + H2O = a tRNA + a D-alpha-amino acid + H(+). Functionally, an aminoacyl-tRNA editing enzyme that deacylates mischarged D-aminoacyl-tRNAs. Also deacylates mischarged glycyl-tRNA(Ala), protecting cells against glycine mischarging by AlaRS. Acts via tRNA-based rather than protein-based catalysis; rejects L-amino acids rather than detecting D-amino acids in the active site. By recycling D-aminoacyl-tRNA to D-amino acids and free tRNA molecules, this enzyme counteracts the toxicity associated with the formation of D-aminoacyl-tRNA entities in vivo and helps enforce protein L-homochirality. The sequence is that of D-aminoacyl-tRNA deacylase from Chlorobaculum parvum (strain DSM 263 / NCIMB 8327) (Chlorobium vibrioforme subsp. thiosulfatophilum).